The chain runs to 402 residues: Zinc finger protein 809 (402 aa).

Residues 4-75 (VSFEDVAVDF…AEASSRSLPG (72 aa)) enclose the KRAB domain. The tract at residues 118 to 139 (QEVSKGTTSRHRRAPVKSLCRK) is disordered. The segment covering 125–139 (TSRHRRAPVKSLCRK) has biased composition (basic residues). 7 consecutive C2H2-type zinc fingers follow at residues 155 to 178 (YECKDCEKVFCNNSTLIKHYRRTH), 184 to 206 (YECDECSKMYYWKSDLTSHQKTH), 213 to 235 (YECSECGKAFFRKSHLNAHERTH), 241 to 263 (YECTECRKAFYYKSDLTRHKKTH), 269 to 291 (FKCEECKKAFSRKSKLAIHQKKH), 297 to 319 (YECTECKKAFSHQSQLTAHRIAH), and 325 to 347 (YECKECNKSFHWKCQLTAHQKRH).

Belongs to the krueppel C2H2-type zinc-finger protein family.

It is found in the nucleus. Its function is as follows. Transcription factor specifically required to repress retrotransposons in embryonic stem cells. Recognizes and binds retroviral DNA sequences from a large subset of mammalian retroviruses and retroelements and repress their expression by recruiting a repressive complex containing TRIM28/KAP1. The protein is Zinc finger protein 809 of Mus musculus (Mouse).